The chain runs to 115 residues: T cell receptor beta variable 7-4 (115 aa).

A signal peptide spans 1–21; that stretch reads MGTRLLCWVVLGFLGTDHTGA. One can recognise an Ig-like domain in the interval 22–115; that stretch reads GVSQSPRYKV…SAVYLCASSL (94 aa). A disulfide bond links cysteine 42 and cysteine 111. Positions 67-97 are disordered; the sequence is YSQSDAQRDKSGRPSGRFSAERPERSVSTLK.

Alpha-beta TR is a heterodimer composed of an alpha and beta chain; disulfide-linked. The alpha-beta TR is associated with the transmembrane signaling CD3 coreceptor proteins to form the TR-CD3 (TcR or TCR). The assembly of alpha-beta TR heterodimers with CD3 occurs in the endoplasmic reticulum where a single alpha-beta TR heterodimer associates with one CD3D-CD3E heterodimer, one CD3G-CD3E heterodimer and one CD247 homodimer forming a stable octameric structure. CD3D-CD3E and CD3G-CD3E heterodimers preferentially associate with TR alpha and TR beta chains, respectively. The association of the CD247 homodimer is the last step of TcR assembly in the endoplasmic reticulum and is required for transport to the cell surface.

The protein resides in the cell membrane. V region of the variable domain of T cell receptor (TR) beta chain that participates in the antigen recognition. Alpha-beta T cell receptors are antigen specific receptors which are essential to the immune response and are present on the cell surface of T lymphocytes. Recognize peptide-major histocompatibility (MH) (pMH) complexes that are displayed by antigen presenting cells (APC), a prerequisite for efficient T cell adaptive immunity against pathogens. Binding of alpha-beta TR to pMH complex initiates TR-CD3 clustering on the cell surface and intracellular activation of LCK that phosphorylates the ITAM motifs of CD3G, CD3D, CD3E and CD247 enabling the recruitment of ZAP70. In turn ZAP70 phosphorylates LAT, which recruits numerous signaling molecules to form the LAT signalosome. The LAT signalosome propagates signal branching to three major signaling pathways, the calcium, the mitogen-activated protein kinase (MAPK) kinase and the nuclear factor NF-kappa-B (NF-kB) pathways, leading to the mobilization of transcription factors that are critical for gene expression and essential for T cell growth and differentiation. The T cell repertoire is generated in the thymus, by V-(D)-J rearrangement. This repertoire is then shaped by intrathymic selection events to generate a peripheral T cell pool of self-MH restricted, non-autoaggressive T cells. Post-thymic interaction of alpha-beta TR with the pMH complexes shapes TR structural and functional avidity. The chain is T cell receptor beta variable 7-4 from Homo sapiens (Human).